Reading from the N-terminus, the 317-residue chain is Protein translocase subunit SecF (317 aa).

6 consecutive transmembrane segments (helical) span residues 11-31 (FYLL…LFGL), 135-155 (RSIV…AFAF), 166-186 (ICAI…FAIL), 197-217 (LFVT…IVVF), 244-266 (LVRS…FFGG), and 276-298 (LLIG…LVSW).

This sequence belongs to the SecD/SecF family. SecF subfamily. In terms of assembly, forms a complex with SecD. Part of the essential Sec protein translocation apparatus which comprises SecA, SecYEG and auxiliary proteins SecDF. Other proteins may also be involved.

It localises to the cell membrane. Its function is as follows. Part of the Sec protein translocase complex. Interacts with the SecYEG preprotein conducting channel. SecDF uses the proton motive force (PMF) to complete protein translocation after the ATP-dependent function of SecA. In Thermobaculum terrenum (strain ATCC BAA-798 / CCMEE 7001 / YNP1), this protein is Protein translocase subunit SecF.